A 358-amino-acid polypeptide reads, in one-letter code: NAC domain-containing protein 12 (358 aa).

The 162-residue stretch at 16-177 (VPPGFRFHPT…GWVVCRVFRK (162 aa)) folds into the NAC domain. The DNA-binding element occupies 116–183 (IGLRKTLVFY…VFRKKNYQKI (68 aa)).

In terms of tissue distribution, stems and roots, specifically in interfascicular fibers (sclerenchyma), cells differentiating into vascular vessels (cambium), and xylem.

The protein resides in the nucleus. Its function is as follows. Transcriptional activator of genes involved in biosynthesis of secondary walls. Together with NST1, required for the secondary cell wall thickening and lignification of sclerenchymatous fibers and secondary xylem vessels (tracheary elements). Seems to repress the secondary cell wall thickening of xylary fibers. May also regulate the secondary cell wall lignification of other tissues. Binds to and activates the promoter of MYB46. This Arabidopsis thaliana (Mouse-ear cress) protein is NAC domain-containing protein 12.